Consider the following 764-residue polypeptide: Protein FAR1-RELATED SEQUENCE 7 (764 aa).

One can recognise an FAR1 1 domain in the interval 42–118 (DYYNSYATRT…QKEHNHDLGG (77 aa)). The segment at 119-144 (HIEEAQTTPRPSVQQRAPAPTKLGIS) is disordered. Over residues 123–133 (AQTTPRPSVQQ) the composition is skewed to polar residues. Residues 204 to 280 (QFYQAYAEVV…NKDHNHDLEP (77 aa)) form the FAR1 2 domain. Residues 375–471 (AVVFDTSYRK…SAWQIRSKER (97 aa)) form the MULE domain. The SWIM-type zinc finger occupies 650-686 (HAVTFSASNLNASCSCQMFEYEGLLCRHILKVFNLLD).

The protein belongs to the FHY3/FAR1 family. Expressed in hypocotyls, rosette and cauline leaves, inflorescences stems, flowers and siliques.

It is found in the nucleus. In terms of biological role, putative transcription activator involved in regulating light control of development. This chain is Protein FAR1-RELATED SEQUENCE 7 (FRS7), found in Arabidopsis thaliana (Mouse-ear cress).